Consider the following 83-residue polypeptide: RNA-binding protein Hfq (83 aa).

A Sm domain is found at 11-71 (DTFLNHVRKN…ISTIMPGHPV (61 aa)).

It belongs to the Hfq family. As to quaternary structure, homohexamer.

In terms of biological role, RNA chaperone that binds small regulatory RNA (sRNAs) and mRNAs to facilitate mRNA translational regulation in response to envelope stress, environmental stress and changes in metabolite concentrations. Also binds with high specificity to tRNAs. The sequence is that of RNA-binding protein Hfq from Methylobacterium radiotolerans (strain ATCC 27329 / DSM 1819 / JCM 2831 / NBRC 15690 / NCIMB 10815 / 0-1).